A 145-amino-acid polypeptide reads, in one-letter code: 3-dehydroquinate dehydratase (145 aa).

Residue Y24 is the Proton acceptor of the active site. Positions 76, 82, and 89 each coordinate substrate. H102 functions as the Proton donor in the catalytic mechanism. Substrate is bound by residues 103-104 (LS) and R113.

The protein belongs to the type-II 3-dehydroquinase family. In terms of assembly, homododecamer.

The catalysed reaction is 3-dehydroquinate = 3-dehydroshikimate + H2O. It functions in the pathway metabolic intermediate biosynthesis; chorismate biosynthesis; chorismate from D-erythrose 4-phosphate and phosphoenolpyruvate: step 3/7. Catalyzes a trans-dehydration via an enolate intermediate. The chain is 3-dehydroquinate dehydratase from Nitrosomonas eutropha (strain DSM 101675 / C91 / Nm57).